The sequence spans 172 residues: Crossover junction endodeoxyribonuclease RuvC (172 aa).

Active-site residues include aspartate 12, glutamate 71, and aspartate 143. The Mg(2+) site is built by aspartate 12, glutamate 71, and aspartate 143.

This sequence belongs to the RuvC family. As to quaternary structure, homodimer which binds Holliday junction (HJ) DNA. The HJ becomes 2-fold symmetrical on binding to RuvC with unstacked arms; it has a different conformation from HJ DNA in complex with RuvA. In the full resolvosome a probable DNA-RuvA(4)-RuvB(12)-RuvC(2) complex forms which resolves the HJ. Requires Mg(2+) as cofactor.

The protein resides in the cytoplasm. It catalyses the reaction Endonucleolytic cleavage at a junction such as a reciprocal single-stranded crossover between two homologous DNA duplexes (Holliday junction).. Functionally, the RuvA-RuvB-RuvC complex processes Holliday junction (HJ) DNA during genetic recombination and DNA repair. Endonuclease that resolves HJ intermediates. Cleaves cruciform DNA by making single-stranded nicks across the HJ at symmetrical positions within the homologous arms, yielding a 5'-phosphate and a 3'-hydroxyl group; requires a central core of homology in the junction. The consensus cleavage sequence is 5'-(A/T)TT(C/G)-3'. Cleavage occurs on the 3'-side of the TT dinucleotide at the point of strand exchange. HJ branch migration catalyzed by RuvA-RuvB allows RuvC to scan DNA until it finds its consensus sequence, where it cleaves and resolves the cruciform DNA. This chain is Crossover junction endodeoxyribonuclease RuvC, found in Coxiella burnetii (strain CbuK_Q154) (Coxiella burnetii (strain Q154)).